A 102-amino-acid polypeptide reads, in one-letter code: Small ribosomal subunit protein uS10 (102 aa).

The protein belongs to the universal ribosomal protein uS10 family. In terms of assembly, part of the 30S ribosomal subunit.

In terms of biological role, involved in the binding of tRNA to the ribosomes. This is Small ribosomal subunit protein uS10 from Listeria innocua serovar 6a (strain ATCC BAA-680 / CLIP 11262).